We begin with the raw amino-acid sequence, 122 residues long: Neutral phospholipase A2 agkistrodotoxin (122 aa).

Intrachain disulfides connect Cys26–Cys115, Cys28–Cys44, Cys43–Cys95, Cys49–Cys122, Cys50–Cys88, Cys57–Cys81, and Cys75–Cys86. 3 residues coordinate Ca(2+): Tyr27, Gly29, and Gly31. Residue His47 is part of the active site. Ca(2+) is bound at residue Asp48. Asp89 is a catalytic residue.

Ca(2+) is required as a cofactor. As to expression, expressed by the venom gland.

The protein localises to the secreted. It catalyses the reaction a 1,2-diacyl-sn-glycero-3-phosphocholine + H2O = a 1-acyl-sn-glycero-3-phosphocholine + a fatty acid + H(+). Functionally, snake venom phospholipase A2 (PLA2) that inhibits neuromuscular transmission by blocking acetylcholine release from the nerve termini. PLA2 catalyzes the calcium-dependent hydrolysis of the 2-acyl groups in 3-sn-phosphoglycerides. The sequence is that of Neutral phospholipase A2 agkistrodotoxin from Gloydius halys (Chinese water mocassin).